The following is a 147-amino-acid chain: uncharacterized protein (147 aa).

To M.jannaschii MJ0215.

This is an uncharacterized protein from Methanocaldococcus jannaschii (strain ATCC 43067 / DSM 2661 / JAL-1 / JCM 10045 / NBRC 100440) (Methanococcus jannaschii).